A 244-amino-acid chain; its full sequence is Putative B3 domain-containing protein At2g31460 (244 aa).

The segment at residues 49-147 (SSMHMENSGF…PVHDGVNLSG (99 aa)) is a DNA-binding region (TF-B3). Disordered stretches follow at residues 175-196 (DGNLPQDSGHDGHNDNLPQDSV) and 217-244 (DSQGYLPDEDEDFGFNDDGSIRDSGHYQ). Positions 235 to 244 (GSIRDSGHYQ) are enriched in basic and acidic residues.

It localises to the nucleus. This Arabidopsis thaliana (Mouse-ear cress) protein is Putative B3 domain-containing protein At2g31460.